Consider the following 100-residue polypeptide: Integration host factor subunit beta (100 aa).

Belongs to the bacterial histone-like protein family. Heterodimer of an alpha and a beta chain.

This protein is one of the two subunits of integration host factor, a specific DNA-binding protein that functions in genetic recombination as well as in transcriptional and translational control. In Agrobacterium fabrum (strain C58 / ATCC 33970) (Agrobacterium tumefaciens (strain C58)), this protein is Integration host factor subunit beta.